We begin with the raw amino-acid sequence, 346 residues long: DNA-directed RNA polymerase subunit alpha (346 aa).

Residues 1-242 (MLIQDGDKLI…DQLSVFINFD (242 aa)) are alpha N-terminal domain (alpha-NTD). The alpha C-terminal domain (alpha-CTD) stretch occupies residues 258-346 (LNPNLFKSID…WLKRKEKNEA (89 aa)).

The protein belongs to the RNA polymerase alpha chain family. As to quaternary structure, homodimer. The RNAP catalytic core consists of 2 alpha, 1 beta, 1 beta' and 1 omega subunit. When a sigma factor is associated with the core the holoenzyme is formed, which can initiate transcription.

The catalysed reaction is RNA(n) + a ribonucleoside 5'-triphosphate = RNA(n+1) + diphosphate. In terms of biological role, DNA-dependent RNA polymerase catalyzes the transcription of DNA into RNA using the four ribonucleoside triphosphates as substrates. This is DNA-directed RNA polymerase subunit alpha from Maridesulfovibrio salexigens (strain ATCC 14822 / DSM 2638 / NCIMB 8403 / VKM B-1763) (Desulfovibrio salexigens).